The chain runs to 226 residues: Exosome complex component rrp46 (226 aa).

The interval 205-226 is disordered; that stretch reads NESDGHENEKNPKEDVEMDVVA. A compositionally biased stretch (basic and acidic residues) spans 207–219; the sequence is SDGHENEKNPKED.

The protein belongs to the RNase PH family. As to quaternary structure, component of the RNA exosome complex. Specifically part of the catalytically inactive RNA exosome core complex (Exo-9) which may associate with the catalytic subunits rrp6 and dis3 in cytoplasmic- and nuclear-specific RNA exosome complex forms. Exo-9 is formed by a hexameric base ring of RNase PH domain-containing subunits and a cap ring consisting of csl4, rrp4 and rrp40.

It is found in the cytoplasm. The protein resides in the nucleus. Its subcellular location is the nucleolus. Functionally, non-catalytic component of the RNA exosome complex which has 3'-&gt;5' exoribonuclease activity and participates in a multitude of cellular RNA processing and degradation events. In the nucleus, the RNA exosome complex is involved in proper maturation of stable RNA species such as rRNA, snRNA and snoRNA, in the elimination of RNA processing by-products and non-coding 'pervasive' transcripts, such as antisense RNA species and cryptic unstable transcripts (CUTs), and of mRNAs with processing defects, thereby limiting or excluding their export to the cytoplasm. In the cytoplasm, the RNA exosome complex is involved in general mRNA turnover and in RNA surveillance pathways, preventing translation of aberrant mRNAs. The catalytic inactive RNA exosome core complex of 9 subunits (Exo-9) is proposed to play a pivotal role in the binding and presentation of RNA for ribonucleolysis, and to serve as a scaffold for the association with catalytic subunits and accessory proteins or complexes. ski6 is part of the hexameric ring of RNase PH domain-containing subunits proposed to form a central channel which threads RNA substrates for degradation. This Schizosaccharomyces pombe (strain 972 / ATCC 24843) (Fission yeast) protein is Exosome complex component rrp46 (rrp46).